Reading from the N-terminus, the 216-residue chain is Maleylacetoacetate isomerase (216 aa).

An N-acetylmethionine modification is found at Met1. The GST N-terminal domain occupies 4–87 (GKPVLYSYFR…YLEETRPIPR (84 aa)). Glutathione contacts are provided by residues 14–19 (SSCSWR) and Gln45. N6-succinyllysine is present on Lys57. Residues Val59, 71-72 (QS), Gln111, and 115-117 (NLS) each bind glutathione. Positions 92–212 (DPQKRAIVRM…HPCRQPDTPA (121 aa)) constitute a GST C-terminal domain. Residue Thr136 is modified to Phosphothreonine. Ser137 carries the phosphoserine modification. Lys177 is subject to N6-succinyllysine. Ser181 is subject to Phosphoserine.

It belongs to the GST superfamily. Zeta family. As to quaternary structure, homodimer. Glutathione is required as a cofactor. Post-translationally, the N-terminus is blocked.

The protein resides in the cytoplasm. It carries out the reaction 4-maleylacetoacetate = 4-fumarylacetoacetate. It catalyses the reaction RX + glutathione = an S-substituted glutathione + a halide anion + H(+). The protein operates within amino-acid degradation; L-phenylalanine degradation; acetoacetate and fumarate from L-phenylalanine: step 5/6. Probable bifunctional enzyme showing minimal glutathione-conjugating activity with ethacrynic acid and 7-chloro-4-nitrobenz-2-oxa-1, 3-diazole and maleylacetoacetate isomerase activity. Also has low glutathione peroxidase activity with t-butyl and cumene hydroperoxides. Is able to catalyze the glutathione dependent oxygenation of dichloroacetic acid to glyoxylic acid. This Rattus norvegicus (Rat) protein is Maleylacetoacetate isomerase (Gstz1).